A 249-amino-acid chain; its full sequence is Metallo-beta-lactamase type 2 (249 aa).

The first 22 residues, 1–22, serve as a signal peptide directing secretion; sequence MLKKIKISLILALGLTSLQAFG. His-98, His-100, Asp-102, His-161, and Cys-180 together coordinate Zn(2+). Residue Lys-183 participates in substrate binding. His-222 is a binding site for Zn(2+).

Belongs to the metallo-beta-lactamase superfamily. Class-B beta-lactamase family. Monomer. Requires Zn(2+) as cofactor.

The protein localises to the periplasm. The catalysed reaction is a beta-lactam + H2O = a substituted beta-amino acid. Its activity is regulated as follows. Inhibited by chelating agents such as EDTA, 1-10 phenanthroline and pyridine-2,6-dicarboxylic acid. Confers resistance to the different beta-lactams antibiotics (penicillin, cephalosporin and carbapenem) via the hydrolysis of the beta-lactam ring. This is Metallo-beta-lactamase type 2 (blaB1) from Elizabethkingia meningoseptica (Chryseobacterium meningosepticum).